We begin with the raw amino-acid sequence, 297 residues long: Phenylalanine-4-hydroxylase (297 aa).

Positions 138, 143, and 184 each coordinate Fe cation.

Belongs to the biopterin-dependent aromatic amino acid hydroxylase family. In terms of assembly, monomer. The cofactor is Fe(2+).

It catalyses the reaction (6R)-L-erythro-5,6,7,8-tetrahydrobiopterin + L-phenylalanine + O2 = (4aS,6R)-4a-hydroxy-L-erythro-5,6,7,8-tetrahydrobiopterin + L-tyrosine. The protein operates within amino-acid degradation; L-phenylalanine degradation; acetoacetate and fumarate from L-phenylalanine: step 1/6. The protein is Phenylalanine-4-hydroxylase (phhA) of Chromobacterium violaceum (strain ATCC 12472 / DSM 30191 / JCM 1249 / CCUG 213 / NBRC 12614 / NCIMB 9131 / NCTC 9757 / MK).